The sequence spans 380 residues: NADPH oxidoreductase (380 aa).

The FAD-binding FR-type domain occupies 58–164 (ARELRGRILG…AAPQGNFVLP (107 aa)). The region spanning 299-380 (GTVTFARSGK…AASGDCVLDI (82 aa)) is the 2Fe-2S ferredoxin-type domain. The [2Fe-2S] cluster site is built by C333, C338, C341, and C368.

Interacts with DesA3 to form a functional acyl-CoA desaturase complex. It depends on [2Fe-2S] cluster as a cofactor. FAD is required as a cofactor.

It localises to the cell membrane. Its pathway is lipid metabolism; fatty acid metabolism. In terms of biological role, is likely involved in the aerobic desaturation system responsible for the synthesis of oleic acid from stearoyl-CoA; oleic acid is a precursor of mycobacterial membrane phospholipids and triglycerides. Is the electron transfer partner for the stearoyl-CoA 9-desaturase DesA3. Catalyzes electron transfer reaction between NADPH and the diiron center of DesA3. Cannot use NADH. This chain is NADPH oxidoreductase, found in Mycobacterium tuberculosis (strain ATCC 25618 / H37Rv).